A 210-amino-acid chain; its full sequence is Uracil phosphoribosyltransferase (210 aa).

5-phospho-alpha-D-ribose 1-diphosphate contacts are provided by residues Arg78, Arg103, and 130-138 (DPMLATGGS). Residues Ile195 and 200–202 (GDA) contribute to the uracil site. Asp201 lines the 5-phospho-alpha-D-ribose 1-diphosphate pocket.

This sequence belongs to the UPRTase family. Mg(2+) is required as a cofactor.

It carries out the reaction UMP + diphosphate = 5-phospho-alpha-D-ribose 1-diphosphate + uracil. It participates in pyrimidine metabolism; UMP biosynthesis via salvage pathway; UMP from uracil: step 1/1. With respect to regulation, allosterically activated by GTP. Its function is as follows. Catalyzes the conversion of uracil and 5-phospho-alpha-D-ribose 1-diphosphate (PRPP) to UMP and diphosphate. The protein is Uracil phosphoribosyltransferase of Leifsonia xyli subsp. xyli (strain CTCB07).